Consider the following 635-residue polypeptide: Rab11 family-interacting protein 4 (635 aa).

Residues 49 to 84 (GQGEEVEKLVKCLDPNDLGRINFKDFCRGVFAMKGC) form the EF-hand domain. The Ca(2+) site is built by Asp62, Asn64, Arg68, and Asp73. The segment at 82-635 (KGCEELLKDV…HNPSILEIKH (554 aa)) is necessary for interaction with RAB11A, subcellular location, homo- or heterooligomerization. Disordered stretches follow at residues 147 to 176 (GPQELDMDSPMESSQGPEGSVKGCGEEKEP) and 216 to 258 (EDYG…QTPR). Over residues 216–225 (EDYGEGDDVD) the composition is skewed to acidic residues. Residues 279–615 (KINLLNDLEA…EEINFRLRQY (337 aa)) are a coiled coil. An FIP-RBD domain is found at 572 to 634 (EAKNLFATQT…DHNPSILEIK (63 aa)).

In terms of assembly, homodimer. Forms a complex with Rab11 (RAB11A or RAB11B) and ARF6. Interacts with RAB11A; the interaction is direct. Forms a heterooligomeric complex with RAB11FIP2, RAB11FIP3 and RAB11FIP5. Interacts with ECPAS. In terms of tissue distribution, strongly expressed in the developing retina. Expressed predominantly in neural tissues.

It localises to the recycling endosome membrane. It is found in the cleavage furrow. Its subcellular location is the midbody. The protein localises to the cytoplasmic vesicle. In terms of biological role, acts as a regulator of endocytic traffic by participating in membrane delivery. Required for the abscission step in cytokinesis, possibly by acting as an 'address tag' delivering recycling endosome membranes to the cleavage furrow during late cytokinesis. May play a role in differentiation during retinal development, in a Rab11-independent manner. The polypeptide is Rab11 family-interacting protein 4 (Rab11fip4) (Mus musculus (Mouse)).